Reading from the N-terminus, the 510-residue chain is MIWHVQNENFILDSTRIFMKAFHLLLFHGSFIFPECILIFGLILLLMIDLTSDQKDIPWLYFISSTSLVMSIAALLFRWREEPMISFSGNFQTNNFNEIFQFLILLCSTLCIPLSVEYIECTEMAITEFLLFVLTATLGGMFLCGANDLITIFVAPECFSLCSYLLSGYTKRDVRSNEATMKYLLMGGASSSILVHGFSWLYGSSGGEIELQEIANGLINTQMYNSPGISIALIFITVGIGFKLSLAPSHQWTPDVYEGSPTPVVAFLSVTSKVAASALATRIFDIPFYFSSNEWHLLLEILAILSMILGNLIAITQTSMKRMLAYSSIGQIGYVIIGIIVGDSNDGYASMITYMLFYISMNLGTFACIVSFGLRTGTDNIRDYAGLYTKDPFLALSLALCLLSLGGLPPLAGFFGKLHLFWCGWQAGLYFLVSIGLLTSVVSIYYYLKIIKLLMTGRNQEITPHVRNYRRSPLRSNNSIELSMIVCVIASTIPGISMNPIIAIAQDTLF.

13 helical membrane passes run 24–44 (LLLF…GLIL), 57–77 (IPWL…ALLF), 99–119 (IFQF…VEYI), 124–144 (MAIT…MFLC), 149–169 (LITI…LSGY), 183–203 (YLLM…WLYG), 227–247 (PGIS…LSLA), 295–315 (WHLL…LIAI), 323–343 (MLAY…IVGD), 354–374 (YMLF…SFGL), 395–415 (ALSL…AGFF), 418–438 (LHLF…IGLL), and 484–504 (MIVC…IIAI).

The protein belongs to the complex I subunit 2 family. NDH is composed of at least 16 different subunits, 5 of which are encoded in the nucleus.

It localises to the plastid. The protein localises to the chloroplast thylakoid membrane. It carries out the reaction a plastoquinone + NADH + (n+1) H(+)(in) = a plastoquinol + NAD(+) + n H(+)(out). It catalyses the reaction a plastoquinone + NADPH + (n+1) H(+)(in) = a plastoquinol + NADP(+) + n H(+)(out). Its function is as follows. NDH shuttles electrons from NAD(P)H:plastoquinone, via FMN and iron-sulfur (Fe-S) centers, to quinones in the photosynthetic chain and possibly in a chloroplast respiratory chain. The immediate electron acceptor for the enzyme in this species is believed to be plastoquinone. Couples the redox reaction to proton translocation, and thus conserves the redox energy in a proton gradient. This Ranunculus macranthus (Large buttercup) protein is NAD(P)H-quinone oxidoreductase subunit 2 A, chloroplastic.